Reading from the N-terminus, the 275-residue chain is Adaptin ear-binding coat-associated protein 1 (275 aa).

Residues 168–275 (AKKGGASKPR…APQPSNWVQF (108 aa)) are disordered. Residues 187–201 (LPPPPGGKVTIPPPS) are compositionally biased toward pro residues. Residue threonine 211 is modified to Phosphothreonine. Residues 233–248 (SPAPVSTSAPAPVSTS) are compositionally biased toward low complexity. Short sequence motifs (WXXF motif) lie at residues 252-255 (WGDF) and 272-275 (WVQF). The span at 256 to 275 (STASSSVPNQAPQPSNWVQF) shows a compositional bias: polar residues.

This sequence belongs to the NECAP family. Interacts with AP1G1 and AP2A1 components of the adapter protein complexes AP-1 and AP-2. Interacts with the GAE domain proteins GGA1, GGA2 and GGA3. In terms of tissue distribution, expressed primarily in brain (at protein level).

It is found in the cytoplasmic vesicle. The protein resides in the clathrin-coated vesicle membrane. The protein localises to the cell membrane. In terms of biological role, involved in endocytosis. The chain is Adaptin ear-binding coat-associated protein 1 (Necap1) from Mus musculus (Mouse).